Here is a 576-residue protein sequence, read N- to C-terminus: Laccase-1 (576 aa).

The signal sequence occupies residues 1-19 (MARTTFLVSVSLFVSAVLA). Plastocyanin-like domains lie at 21–145 (TVEY…LVIY) and 157–304 (VDDE…LVYE). Residue Asn-41 is glycosylated (N-linked (GlcNAc...) asparagine). Cu cation-binding residues include His-82, His-84, His-127, and His-129. The cysteines at positions 103 and 562 are disulfide-linked. N-linked (GlcNAc...) asparagine glycans are attached at residues Asn-182, Asn-228, Asn-294, and Asn-368. The 201-residue stretch at 376-576 (DESKLVPLEY…NWLKSNPGQL (201 aa)) folds into the Plastocyanin-like 3 domain. The Cu cation site is built by His-471, His-474, His-476, His-523, Cys-524, His-525, and His-529.

Belongs to the multicopper oxidase family. Homodimer. Cu cation serves as cofactor. As to expression, in mycelia, at a lower level than LCC4.

Its subcellular location is the secreted. The catalysed reaction is 4 hydroquinone + O2 = 4 benzosemiquinone + 2 H2O. Functionally, lignin degradation and detoxification of lignin-derived products. The protein is Laccase-1 (LCC1) of Thanatephorus cucumeris (Black scurf of potato).